The following is a 524-amino-acid chain: Glutamyl-tRNA(Gln) amidotransferase subunit A, mitochondrial (524 aa).

Residues Lys76 and Ser171 each act as charge relay system in the active site. Ser195 serves as the catalytic Acyl-ester intermediate.

This sequence belongs to the amidase family. GatA subfamily. In terms of assembly, subunit of the heterotrimeric GatCAB amidotransferase (AdT) complex, composed of A (qrsl1), B (gatb) and C (gatc) subunits.

The protein localises to the mitochondrion. It carries out the reaction L-glutamyl-tRNA(Gln) + L-glutamine + ATP + H2O = L-glutaminyl-tRNA(Gln) + L-glutamate + ADP + phosphate + H(+). Functionally, allows the formation of correctly charged Gln-tRNA(Gln) through the transamidation of misacylated Glu-tRNA(Gln) in the mitochondria. The reaction takes place in the presence of glutamine and ATP through an activated gamma-phospho-Glu-tRNA(Gln). The protein is Glutamyl-tRNA(Gln) amidotransferase subunit A, mitochondrial (qrsl1) of Xenopus tropicalis (Western clawed frog).